The sequence spans 390 residues: GTP 3',8-cyclase, mitochondrial (390 aa).

Residues 1 to 45 (MRRCFSKITDCHLGFKNSNFLLVGSEVGSGSVTRTITTTTSERLF) constitute a mitochondrion transit peptide. Residues 69 to 290 (KFGRLHTYLR…PSIKRMQDHP (222 aa)) form the Radical SAM core domain. Position 78 (Arg-78) interacts with GTP. [4Fe-4S] cluster is bound by residues Cys-85 and Cys-89. S-adenosyl-L-methionine is bound at residue Tyr-91. Cys-92 is a [4Fe-4S] cluster binding site. GTP is bound at residue Arg-128. Residue Gly-132 participates in S-adenosyl-L-methionine binding. A GTP-binding site is contributed by Thr-159. Ser-183 provides a ligand contact to S-adenosyl-L-methionine. Residue Lys-220 participates in GTP binding. Met-254 lines the S-adenosyl-L-methionine pocket. [4Fe-4S] cluster contacts are provided by Cys-317 and Cys-320. Residue 322 to 324 (RLR) participates in GTP binding. Cys-334 contributes to the [4Fe-4S] cluster binding site.

It belongs to the radical SAM superfamily. MoaA family. In terms of assembly, homodimer. Requires [4Fe-4S] cluster as cofactor. Expressed in all organs, with an abundant expression in the roots.

The protein localises to the mitochondrion matrix. It carries out the reaction GTP + AH2 + S-adenosyl-L-methionine = (8S)-3',8-cyclo-7,8-dihydroguanosine 5'-triphosphate + 5'-deoxyadenosine + L-methionine + A + H(+). It functions in the pathway cofactor biosynthesis; molybdopterin biosynthesis. In terms of biological role, catalyzes the cyclization of GTP to (8S)-3',8-cyclo-7,8-dihydroguanosine 5'-triphosphate. The sequence is that of GTP 3',8-cyclase, mitochondrial (CNX2) from Arabidopsis thaliana (Mouse-ear cress).